Consider the following 390-residue polypeptide: Serpin B4 (390 aa).

Methionine 1 carries the post-translational modification N-acetylmethionine.

This sequence belongs to the serpin family. Ov-serpin subfamily. In terms of tissue distribution, squamous cells.

It is found in the cytoplasm. Its function is as follows. May act as a protease inhibitor to modulate the host immune response against tumor cells. The polypeptide is Serpin B4 (SERPINB4) (Homo sapiens (Human)).